Consider the following 133-residue polypeptide: DUF35 domain-containing scaffold protein (133 aa).

4 residues coordinate Zn(2+): Cys23, Cys26, Cys37, and Cys40.

This sequence belongs to the scaffold protein DUF35 family. In terms of assembly, interacts with acetoacetyl-CoA thiolase and HMG-CoA synthase (HMGCS) that catalyzes the first and second step in the mevalonate pathway, respectively.

Functions as a scaffold to connect the acetoacetyl-CoA thiolase and HMG-CoA synthase (HMGCS) dimers in the channeling thiolase/HMGCS complex, which allows for efficient coupling of the endergonic thiolase reaction with the exergonic HMGCS reaction. This chain is DUF35 domain-containing scaffold protein, found in Methanothermobacter thermautotrophicus (strain ATCC 29096 / DSM 1053 / JCM 10044 / NBRC 100330 / Delta H) (Methanobacterium thermoautotrophicum).